The following is a 379-amino-acid chain: Succinyl-diaminopimelate desuccinylase (379 aa).

His68 contributes to the Zn(2+) binding site. Residue Asp70 is part of the active site. Asp101 is a Zn(2+) binding site. Glu135 functions as the Proton acceptor in the catalytic mechanism. 3 residues coordinate Zn(2+): Glu136, Glu164, and His350.

It belongs to the peptidase M20A family. DapE subfamily. Homodimer. Zn(2+) serves as cofactor. It depends on Co(2+) as a cofactor.

The catalysed reaction is N-succinyl-(2S,6S)-2,6-diaminopimelate + H2O = (2S,6S)-2,6-diaminopimelate + succinate. Its pathway is amino-acid biosynthesis; L-lysine biosynthesis via DAP pathway; LL-2,6-diaminopimelate from (S)-tetrahydrodipicolinate (succinylase route): step 3/3. In terms of biological role, catalyzes the hydrolysis of N-succinyl-L,L-diaminopimelic acid (SDAP), forming succinate and LL-2,6-diaminopimelate (DAP), an intermediate involved in the bacterial biosynthesis of lysine and meso-diaminopimelic acid, an essential component of bacterial cell walls. This chain is Succinyl-diaminopimelate desuccinylase, found in Bordetella bronchiseptica (strain ATCC BAA-588 / NCTC 13252 / RB50) (Alcaligenes bronchisepticus).